Reading from the N-terminus, the 835-residue chain is Phenylalanine--tRNA ligase beta subunit (835 aa).

Positions 44–160 (PETTGPLVFG…SYGEPGEDAR (117 aa)) constitute a tRNA-binding domain. Residues 419-494 (PAMQPITMKV…RLEGLEAIPT (76 aa)) enclose the B5 domain. Positions 472, 478, 481, and 482 each coordinate Mg(2+). The FDX-ACB domain occupies 741–834 (SSFPALHQDI…AKEKFNAEMR (94 aa)).

Belongs to the phenylalanyl-tRNA synthetase beta subunit family. Type 1 subfamily. In terms of assembly, tetramer of two alpha and two beta subunits. The cofactor is Mg(2+).

The protein resides in the cytoplasm. The catalysed reaction is tRNA(Phe) + L-phenylalanine + ATP = L-phenylalanyl-tRNA(Phe) + AMP + diphosphate + H(+). The chain is Phenylalanine--tRNA ligase beta subunit from Corynebacterium glutamicum (strain ATCC 13032 / DSM 20300 / JCM 1318 / BCRC 11384 / CCUG 27702 / LMG 3730 / NBRC 12168 / NCIMB 10025 / NRRL B-2784 / 534).